The primary structure comprises 503 residues: ATP synthase subunit alpha (503 aa).

169–176 (GDRKTGKT) is an ATP binding site.

The protein belongs to the ATPase alpha/beta chains family. In terms of assembly, F-type ATPases have 2 components, CF(1) - the catalytic core - and CF(0) - the membrane proton channel. CF(1) has five subunits: alpha(3), beta(3), gamma(1), delta(1), epsilon(1). CF(0) has three main subunits: a(1), b(2) and c(9-12). The alpha and beta chains form an alternating ring which encloses part of the gamma chain. CF(1) is attached to CF(0) by a central stalk formed by the gamma and epsilon chains, while a peripheral stalk is formed by the delta and b chains.

The protein resides in the cell membrane. It catalyses the reaction ATP + H2O + 4 H(+)(in) = ADP + phosphate + 5 H(+)(out). In terms of biological role, produces ATP from ADP in the presence of a proton gradient across the membrane. The alpha chain is a regulatory subunit. In Ligilactobacillus salivarius (strain UCC118) (Lactobacillus salivarius), this protein is ATP synthase subunit alpha.